A 253-amino-acid polypeptide reads, in one-letter code: Large ribosomal subunit protein bL28m (253 aa).

The transit peptide at 1 to 55 directs the protein to the mitochondrion; the sequence is MPLHKYPPALWDVLKLKDGIYARLPEHYRRSLLEKHKPYPVHWKPHGLKYRLNPK.

Belongs to the bacterial ribosomal protein bL28 family. As to quaternary structure, component of the mitochondrial ribosome large subunit (39S) which comprises a 16S rRNA and about 50 distinct proteins.

It is found in the mitochondrion. This chain is Large ribosomal subunit protein bL28m (mrpl28), found in Xenopus laevis (African clawed frog).